The primary structure comprises 364 residues: A-type ATP synthase subunit C (364 aa).

It belongs to the V-ATPase V0D/AC39 subunit family. In terms of assembly, has multiple subunits with at least A(3), B(3), C, D, E, F, H, I and proteolipid K(x).

The protein resides in the cell membrane. Functionally, component of the A-type ATP synthase that produces ATP from ADP in the presence of a proton gradient across the membrane. In Desulfurococcus sp. (strain SY), this protein is A-type ATP synthase subunit C.